A 199-amino-acid chain; its full sequence is Glycerol-3-phosphate acyltransferase (199 aa).

Transmembrane regions (helical) follow at residues 5–25 (VLTIVIIVGAYLAGSVSSAVL), 56–76 (SAALVLFCDMLKGAAPAYLAF), 83–103 (IALGVIAIAACLGHIFPIFFG), 118–138 (APIGHDLALCLLASWIVLVLV), and 141–161 (YSSFAAICTALLAPVYTWWLD).

It belongs to the PlsY family. As to quaternary structure, probably interacts with PlsX.

It is found in the cell inner membrane. It catalyses the reaction an acyl phosphate + sn-glycerol 3-phosphate = a 1-acyl-sn-glycero-3-phosphate + phosphate. Its pathway is lipid metabolism; phospholipid metabolism. In terms of biological role, catalyzes the transfer of an acyl group from acyl-phosphate (acyl-PO(4)) to glycerol-3-phosphate (G3P) to form lysophosphatidic acid (LPA). This enzyme utilizes acyl-phosphate as fatty acyl donor, but not acyl-CoA or acyl-ACP. The protein is Glycerol-3-phosphate acyltransferase of Shewanella halifaxensis (strain HAW-EB4).